The following is a 297-amino-acid chain: ClpXP adapter protein SpxH (297 aa).

It belongs to the SpxH family. Interacts with Spx.

The protein resides in the cytoplasm. Functionally, adapter protein required for efficient degradation of Spx by ClpXP under non-stress conditions. Interaction with Spx stabilizes Spx and exposes the C-terminus of Spx for recognition and proteolysis by ClpXP. The chain is ClpXP adapter protein SpxH from Bacillus cereus (strain ATCC 14579 / DSM 31 / CCUG 7414 / JCM 2152 / NBRC 15305 / NCIMB 9373 / NCTC 2599 / NRRL B-3711).